We begin with the raw amino-acid sequence, 1702 residues long: DNA polymerase (1702 aa).

DOD-type homing endonuclease domains are found at residues 776–909 and 1229–1368; these read LLGY…SLGI and LVGL…IVGI.

The protein belongs to the DNA polymerase type-B family. In terms of processing, this protein undergoes a protein self splicing that involves a post-translational excision of the two intervening regions (inteins) followed by peptide ligation.

The catalysed reaction is DNA(n) + a 2'-deoxyribonucleoside 5'-triphosphate = DNA(n+1) + diphosphate. Functionally, in addition to polymerase activity, this DNA polymerase exhibits 3' to 5' exonuclease activity. Intein encoded endonucleases are thought to mediate intein mobility by site-specific recombination initiated by endonuclease cleavage at the 'homing site' in gene that lack the intein. The chain is DNA polymerase (pol) from Thermococcus litoralis.